The following is a 228-amino-acid chain: Translin (228 aa).

The interval 86 to 90 (RFHEH) is DNA/RNA binding. A leucine-zipper region spans residues 177-198 (LDSGFRLLNLKNDSLRKRYDGL). The residue at position 187 (Lys-187) is an N6-acetyllysine. Phosphoserine is present on Ser-190. Lys-199 is modified (N6-acetyllysine).

The protein belongs to the translin family. As to quaternary structure, ring-shaped heterooctamer of six TSN and two TSNAX subunits, DNA/RNA binding occurs inside the ring.

The protein resides in the cytoplasm. The protein localises to the nucleus. Its function is as follows. DNA-binding protein that specifically recognizes consensus sequences at the breakpoint junctions in chromosomal translocations, mostly involving immunoglobulin (Ig)/T-cell receptor gene segments. Seems to recognize single-stranded DNA ends generated by staggered breaks occurring at recombination hot spots. Functionally, exhibits both single-stranded and double-stranded endoribonuclease activity. May act as an activator of RNA-induced silencing complex (RISC) by facilitating endonucleolytic cleavage of the siRNA passenger strand. This Bos taurus (Bovine) protein is Translin (TSN).